A 200-amino-acid chain; its full sequence is 3-isopropylmalate dehydratase small subunit (200 aa).

It belongs to the LeuD family. LeuD type 1 subfamily. As to quaternary structure, heterodimer of LeuC and LeuD.

It carries out the reaction (2R,3S)-3-isopropylmalate = (2S)-2-isopropylmalate. It participates in amino-acid biosynthesis; L-leucine biosynthesis; L-leucine from 3-methyl-2-oxobutanoate: step 2/4. In terms of biological role, catalyzes the isomerization between 2-isopropylmalate and 3-isopropylmalate, via the formation of 2-isopropylmaleate. The polypeptide is 3-isopropylmalate dehydratase small subunit (Vibrio campbellii (strain ATCC BAA-1116)).